The chain runs to 813 residues: Calpain-7 (813 aa).

Position 1 is an N-acetylmethionine (methionine 1). Threonine 95 bears the Phosphothreonine mark. A Calpain catalytic domain is found at 232–540; the sequence is RERFAYPMPF…YDVIYLSWNP (309 aa). Residues cysteine 290, histidine 458, and asparagine 478 contribute to the active site. The segment at 541–701 is domain III; sequence GLLKESTCIH…INGKWSGQSA (161 aa). The interval 702 to 813 is domain N; sequence GGCGNFQETH…VIPIKTTQLQ (112 aa).

This sequence belongs to the peptidase C2 family.

The protein resides in the nucleus. In terms of biological role, calcium-regulated non-lysosomal thiol-protease. The chain is Calpain-7 (CAPN7) from Sus scrofa (Pig).